The sequence spans 327 residues: Ribosomal RNA large subunit methyltransferase F (327 aa).

The segment at 1–24 is disordered; that stretch reads MPRKTSSQPRPAEPKAVLHPRNRH.

It belongs to the methyltransferase superfamily. METTL16/RlmF family.

The protein resides in the cytoplasm. The enzyme catalyses adenosine(1618) in 23S rRNA + S-adenosyl-L-methionine = N(6)-methyladenosine(1618) in 23S rRNA + S-adenosyl-L-homocysteine + H(+). In terms of biological role, specifically methylates the adenine in position 1618 of 23S rRNA. This chain is Ribosomal RNA large subunit methyltransferase F, found in Stutzerimonas stutzeri (strain A1501) (Pseudomonas stutzeri).